A 379-amino-acid chain; its full sequence is Chaperone protein DnaJ (379 aa).

The region spanning 4–69 is the J domain; the sequence is DLYETLGVKK…QKRAAYDRYG (66 aa). A CR-type zinc finger spans residues 137–215; sequence GKTAQIRVPT…CHGQGRVTEE (79 aa). Zn(2+) is bound by residues Cys-150, Cys-153, Cys-167, Cys-170, Cys-189, Cys-192, Cys-203, and Cys-206. 4 CXXCXGXG motif repeats span residues 150–157, 167–174, 189–196, and 203–210; these read CDVCTGSG, CATCQGSG, CPTCGGRG, and CTKCHGQG.

The protein belongs to the DnaJ family. Homodimer. Zn(2+) serves as cofactor.

The protein localises to the cytoplasm. Functionally, participates actively in the response to hyperosmotic and heat shock by preventing the aggregation of stress-denatured proteins and by disaggregating proteins, also in an autonomous, DnaK-independent fashion. Unfolded proteins bind initially to DnaJ; upon interaction with the DnaJ-bound protein, DnaK hydrolyzes its bound ATP, resulting in the formation of a stable complex. GrpE releases ADP from DnaK; ATP binding to DnaK triggers the release of the substrate protein, thus completing the reaction cycle. Several rounds of ATP-dependent interactions between DnaJ, DnaK and GrpE are required for fully efficient folding. Also involved, together with DnaK and GrpE, in the DNA replication of plasmids through activation of initiation proteins. This Sinorhizobium fredii (strain NBRC 101917 / NGR234) protein is Chaperone protein DnaJ.